The chain runs to 364 residues: Coproporphyrin III ferrochelatase (364 aa).

Residues Arg29 and Tyr118 each coordinate Fe-coproporphyrin III. His169 and Glu250 together coordinate Fe(2+).

This sequence belongs to the ferrochelatase family.

The protein localises to the cytoplasm. It carries out the reaction Fe-coproporphyrin III + 2 H(+) = coproporphyrin III + Fe(2+). It participates in porphyrin-containing compound metabolism; protoheme biosynthesis. In terms of biological role, involved in coproporphyrin-dependent heme b biosynthesis. Catalyzes the insertion of ferrous iron into coproporphyrin III to form Fe-coproporphyrin III. The sequence is that of Coproporphyrin III ferrochelatase from Streptococcus pneumoniae serotype 4 (strain ATCC BAA-334 / TIGR4).